The following is a 381-amino-acid chain: Pulmonary surfactant-associated protein B (381 aa).

The first 24 residues, 1–24, serve as a signal peptide directing secretion; that stretch reads MAESHLLQWLLLLLPTLCGPGTAA. In terms of domain architecture, Saposin A-type spans 25–65; that stretch reads WTTSSLACAQGPEFWCQSLEQALQCRALGHCLQEVWGHVGA. Positions 25 to 200 are excised as a propeptide; that stretch reads WTTSSLACAQ…PHTQDLSEQQ (176 aa). Saposin B-type domains lie at 65 to 147, 204 to 281, and 295 to 370; these read ADDL…KSRQ, PLPY…SMDD, and RDSE…GTMS. Disulfide bonds link C69–C143, C72–C137, C100–C112, C208–C277, C211–C271, C235–C246, C299–C366, C302–C360, and C325–C335. A glycan (N-linked (GlcNAc...) asparagine) is linked at N129. Residues 280–381 constitute a propeptide that is removed on maturation; it reads DDSAGPRSPT…PLQCIHSPDL (102 aa). N-linked (GlcNAc...) asparagine glycosylation occurs at N311.

Homodimer; disulfide-linked.

It localises to the secreted. It is found in the extracellular space. Its subcellular location is the surface film. In terms of biological role, pulmonary surfactant-associated proteins promote alveolar stability by lowering the surface tension at the air-liquid interface in the peripheral air spaces. SP-B increases the collapse pressure of palmitic acid to nearly 70 millinewtons per meter. The sequence is that of Pulmonary surfactant-associated protein B (SFTPB) from Homo sapiens (Human).